A 400-amino-acid chain; its full sequence is Nicotinate phosphoribosyltransferase (400 aa).

Histidine 220 bears the Phosphohistidine; by autocatalysis mark.

It belongs to the NAPRTase family. Transiently phosphorylated on a His residue during the reaction cycle. Phosphorylation strongly increases the affinity for substrates and increases the rate of nicotinate D-ribonucleotide production. Dephosphorylation regenerates the low-affinity form of the enzyme, leading to product release.

The enzyme catalyses nicotinate + 5-phospho-alpha-D-ribose 1-diphosphate + ATP + H2O = nicotinate beta-D-ribonucleotide + ADP + phosphate + diphosphate. The protein operates within cofactor biosynthesis; NAD(+) biosynthesis; nicotinate D-ribonucleotide from nicotinate: step 1/1. Catalyzes the synthesis of beta-nicotinate D-ribonucleotide from nicotinate and 5-phospho-D-ribose 1-phosphate at the expense of ATP. The polypeptide is Nicotinate phosphoribosyltransferase (Salmonella schwarzengrund (strain CVM19633)).